The primary structure comprises 247 residues: MVDREQLVQKARLAEQAERYDDMAAAMKNVTELNEPLSNEERNLLSVAYKNVVGARRSSWRVISSIEQKTSADGNEKKIEMVRAYREKIEKELEAVCQDVLSLLDNYLIKNCSETQYESKVFYLKMKGDYYRYLAEVATGEKRATVVESSEKAYSEAHEISKEHMQPTHPIRLGLALNYSVFYYEIQNAPEQACHLAKTAFDDAIAELDTLNEDSYKDSTLIMQLLRDNLTLWTSDQQDDDGGEGNN.

The residue at position 1 (Met1) is an N-acetylmethionine; in 14-3-3 protein gamma; alternate; partial. An N-acetylvaline; in 14-3-3 protein gamma, N-terminally processed; partial modification is found at Val2. Val2 bears the N-acetylvaline; partial mark. Positions 2–166 (VDREQLVQKA…AHEISKEHMQ (165 aa)) are required for interaction with SPATA18/MIEAP (isoform 2) but dispensable for binding to SPATA18/MIEAP (isoform 1). Residues 2–247 (VDREQLVQKA…QDDDGGEGNN (246 aa)) are interaction with SPATA18/MIEAP. Phosphoserine is present on Ser71. A Phosphotyrosine modification is found at Tyr133. Thr145 bears the Phosphothreonine mark. Ser215 bears the Phosphoserine mark. Thr234 is modified (phosphothreonine). Ser235 is modified (phosphoserine).

This sequence belongs to the 14-3-3 family. Homodimer. Part of a complex that contains DSG3, PKP1, YAP1 and YWHAG; the complex is required for localization of DSG3 and YAP1 to the cell membrane in keratinocytes. Interacts with SAMSN1. Interacts with RAF1, SSH1 and CRTC2/TORC2. Interacts with ABL1 (phosphorylated form); the interaction retains it in the cytoplasm. Interacts with GAB2. Interacts with MDM4 (phosphorylated); negatively regulates MDM4 activity toward TP53. Interacts with PKA-phosphorylated AANAT and SIRT2. Interacts with the 'Thr-369' phosphorylated form of DAPK2. Interacts with PI4KB, TBC1D22A and TBC1D22B. Interacts with SLITRK1. Interacts with LRRK2; this interaction is dependent on LRRK2 phosphorylation. Interacts with MARK2 and MARK3. Interacts with MEFV. Interacts with ENDOG, TSC2 and PIK3C3; interaction with ENDOG weakens its interaction with TSC2 and PIK3C3. Interacts with (phosphorylated) WDR24. Interacts with BEST1; this interaction promotes L-glutamate channel activity leading to the positive regulation of NMDA glutamate receptor activity through the L-glutamate secretion. Interacts with PKP1 (when phosphorylated); the interaction results in translocation of PKP1 to the cytoplasm and loss of intercellular adhesion in keratinocytes. Interacts with SPATA18/MIEAP (isoforms 1 and 2); a protein that also plays a role in MALM. In terms of processing, phosphorylated by various PKC isozymes. Highly expressed in brain, skeletal muscle, and heart.

It is found in the cytoplasm. It localises to the cytosol. The protein resides in the mitochondrion matrix. Its function is as follows. Adapter protein implicated in the regulation of a large spectrum of both general and specialized signaling pathways. Binds to a large number of partners, usually by recognition of a phosphoserine or phosphothreonine motif. Binding generally results in the modulation of the activity of the binding partner. Promotes inactivation of WDR24 component of the GATOR2 complex by binding to phosphorylated WDR24. Participates in the positive regulation of NMDA glutamate receptor activity by promoting the L-glutamate secretion through interaction with BEST1. Reduces keratinocyte intercellular adhesion, via interacting with PKP1 and sequestering it in the cytoplasm, thereby reducing its incorporation into desmosomes. Plays a role in mitochondrial protein catabolic process (also named MALM) that promotes the degradation of damaged proteins inside mitochondria. This Homo sapiens (Human) protein is 14-3-3 protein gamma.